We begin with the raw amino-acid sequence, 692 residues long: Elongation factor G (692 aa).

The region spanning 8-282 (EKTRNIGIMA…AVIDYLPSPL (275 aa)) is the tr-type G domain. GTP is bound by residues 17 to 24 (AHVDAGKT), 81 to 85 (DTPGH), and 135 to 138 (NKMD).

It belongs to the TRAFAC class translation factor GTPase superfamily. Classic translation factor GTPase family. EF-G/EF-2 subfamily.

It is found in the cytoplasm. In terms of biological role, catalyzes the GTP-dependent ribosomal translocation step during translation elongation. During this step, the ribosome changes from the pre-translocational (PRE) to the post-translocational (POST) state as the newly formed A-site-bound peptidyl-tRNA and P-site-bound deacylated tRNA move to the P and E sites, respectively. Catalyzes the coordinated movement of the two tRNA molecules, the mRNA and conformational changes in the ribosome. The polypeptide is Elongation factor G (Streptococcus agalactiae serotype III (strain NEM316)).